We begin with the raw amino-acid sequence, 255 residues long: Hemin import ATP-binding protein HmuV (255 aa).

The ABC transporter domain maps to 2 to 238 (LRAHNLHIRR…ESLKAVFGLE (237 aa)). Residue 34–41 (GPNGAGKS) coordinates ATP.

This sequence belongs to the ABC transporter superfamily. Heme (hemin) importer (TC 3.A.1.14.5) family. The complex is composed of two ATP-binding proteins (HmuV), two transmembrane proteins (HmuU) and a solute-binding protein (HmuT).

It localises to the cell inner membrane. Functionally, part of the ABC transporter complex HmuTUV involved in hemin import. Responsible for energy coupling to the transport system. This is Hemin import ATP-binding protein HmuV from Pseudomonas fluorescens (strain Pf0-1).